A 149-amino-acid chain; its full sequence is Large ribosomal subunit protein bL9 (149 aa).

The protein belongs to the bacterial ribosomal protein bL9 family.

Binds to the 23S rRNA. The polypeptide is Large ribosomal subunit protein bL9 (Thermotoga sp. (strain RQ2)).